A 242-amino-acid chain; its full sequence is N-alpha-acetyltransferase 60 (242 aa).

Topologically, residues 1–192 (MSEEERPAAL…GGHPPWTVMD (192 aa)) are cytoplasmic. The N-acetyltransferase domain occupies 13–182 (TILRFLCHDD…DAYTYVLYLN (170 aa)). Tyr38 contributes to the substrate binding site. Tyr97 is a catalytic residue. Leu99 is a binding site for substrate. Acetyl-CoA is bound by residues 101 to 103 (LGV) and 109 to 114 (KQGIGS). The active site involves His138. Acetyl-CoA is bound by residues Asn143 and 150-153 (YENR). Residues 162 to 173 (PYYYSIRGVLQD) are required for homodimerization. Tyr165 contributes to the substrate binding site. Positions 193–236 (YLQHLGSALAGFSPCTLPQRIYRQAHTLLRSLLPWSSISAKSGI) form an intramembrane region, helical. Topologically, residues 237–242 (EYSRTM) are cytoplasmic.

Belongs to the acetyltransferase family. NAA60 subfamily. In terms of assembly, monomer and homodimer; monomer in presence of substrate and homodimer in its absence.

Its subcellular location is the golgi apparatus membrane. The catalysed reaction is N-terminal L-methionyl-[transmembrane protein] + acetyl-CoA = N-terminal N(alpha)-acetyl-L-methionyl-[transmembrane protein] + CoA + H(+). It catalyses the reaction L-lysyl-[protein] + acetyl-CoA = N(6)-acetyl-L-lysyl-[protein] + CoA + H(+). Its function is as follows. N-alpha-acetyltransferase that specifically mediates the acetylation of N-terminal residues of the transmembrane proteins, with a strong preference for N-termini facing the cytosol. Displays N-terminal acetyltransferase activity towards a range of N-terminal sequences including those starting with Met-Lys, Met-Val, Met-Ala and Met-Met. Required for normal chromosomal segregation during anaphase. May also show histone acetyltransferase activity; such results are however unclear in vivo and would require additional experimental evidences. The chain is N-alpha-acetyltransferase 60 (naa60) from Xenopus tropicalis (Western clawed frog).